A 303-amino-acid polypeptide reads, in one-letter code: Coenzyme PQQ synthesis protein B (303 aa).

It belongs to the PqqB family.

It participates in cofactor biosynthesis; pyrroloquinoline quinone biosynthesis. May be involved in the transport of PQQ or its precursor to the periplasm. This Pseudomonas savastanoi pv. phaseolicola (strain 1448A / Race 6) (Pseudomonas syringae pv. phaseolicola (strain 1448A / Race 6)) protein is Coenzyme PQQ synthesis protein B.